The chain runs to 230 residues: Ribosomal RNA small subunit methyltransferase Nep1 (230 aa).

S-adenosyl-L-methionine-binding positions include glycine 184, glycine 189, and 205–210 (IYNKPL).

It belongs to the class IV-like SAM-binding methyltransferase superfamily. RNA methyltransferase NEP1 family. As to quaternary structure, homodimer.

The catalysed reaction is a pseudouridine in rRNA + S-adenosyl-L-methionine = an N(1)-methylpseudouridine in rRNA + S-adenosyl-L-homocysteine + H(+). In terms of biological role, methyltransferase involved in ribosomal biogenesis. Specifically catalyzes the N1-methylation of the pseudouridine corresponding to position 914 in M.jannaschii 16S rRNA. The protein is Ribosomal RNA small subunit methyltransferase Nep1 of Staphylothermus marinus (strain ATCC 43588 / DSM 3639 / JCM 9404 / F1).